The chain runs to 151 residues: MADSERLSAPGCWLACTSFSRTKKGILLFAEIILCLVILICFSASTSAYSSLSVIEMIFAAVLFVFYMCDLHSKISFINWPWTDFFRSLIAAILYLITSIVVLVEGRGSSKIVAGVLGLLATLLFGYDAYITFPLKQQRHTAAPTDPTDGP.

Residues 19–137 (FSRTKKGILL…DAYITFPLKQ (119 aa)) form the MARVEL domain. The next 4 helical transmembrane spans lie at 25 to 45 (GILL…FSAS), 48 to 68 (AYSS…VFYM), 85 to 105 (FFRS…VLVE), and 112 to 132 (IVAG…AYIT).

The protein localises to the membrane. Functionally, may play a role in cell differentiation in the intestinal epithelium. This is Proteolipid protein 2 (Plp2) from Rattus norvegicus (Rat).